The sequence spans 834 residues: Striatin-interacting protein 2 (834 aa).

The segment at 1 to 48 (MEDPAAPGTGGPPANGNGNGGGKGKQAAPKGREAFRSQRRESEGSVDC) is disordered. The segment covering 8 to 24 (GTGGPPANGNGNGGGKG) has biased composition (gly residues). Positions 30–43 (KGREAFRSQRRESE) are enriched in basic and acidic residues. 3 positions are modified to phosphoserine: S318, S329, and S354. Residues 321 to 345 (SYTLDLGESQLAPPPSKLRGRRGSR) are disordered. The interval 360–382 (ERDLFKTEEPATEEEEESAGDGE) is disordered. The span at 369 to 379 (PATEEEEESAG) shows a compositional bias: acidic residues.

The protein belongs to the STRIP family. In terms of assembly, part of the core of STRIPAK complexes composed of PP2A catalytic and scaffolding subunits, the striatins (PP2A regulatory subunits), the striatin-associated proteins MOB4, STRIP1 and STRIP2, PDCD10 and members of the STE20 kinases, such as STK24 and STK26. Interacts with CTTNBP2NL.

It is found in the cytoplasm. In terms of biological role, plays a role in the regulation of cell morphology and cytoskeletal organization. Required in the control of cell shape. Calmodulin-binding scaffolding protein which is the center of the striatin-interacting phosphatase and kinase (STRIPAK) complexes. STRIPAK complexes have critical roles in protein (de)phosphorylation and are regulators of multiple signaling pathways including Hippo, MAPK, nuclear receptor and cytoskeleton remodeling. Different types of STRIPAK complexes are involved in a variety of biological processes such as cell growth, differentiation, apoptosis, metabolism and immune regulation. This chain is Striatin-interacting protein 2, found in Homo sapiens (Human).